The primary structure comprises 127 residues: Protein B20 (127 aa).

The interval 86–127 (DRTGMNSESDSESDNISIKTEYENEYEFYDETQDQSTQHNDL) is disordered. Acidic residues predominate over residues 108-118 (ENEYEFYDETQ).

The polypeptide is Protein B20 (Homo sapiens (Human)).